The sequence spans 256 residues: Endonuclease NucS (256 aa).

The tract at residues 62–97 is disordered; the sequence is AAKSAQHSRESVAGGAVDGDSATHSPESVAAGEPEK.

Belongs to the NucS endonuclease family.

It is found in the cytoplasm. In terms of biological role, cleaves both 3' and 5' ssDNA extremities of branched DNA structures. This chain is Endonuclease NucS, found in Bifidobacterium longum (strain NCC 2705).